We begin with the raw amino-acid sequence, 910 residues long: Staphylococcal nuclease domain-containing protein 1 (910 aa).

Alanine 2 bears the N-acetylalanine mark. TNase-like domains lie at 18-166 (TVQR…MWSE), 193-328 (KPVN…IWRD), and 341-496 (KQFV…LHSK). Threonine 103 carries the phosphothreonine modification. The residue at position 193 (lysine 193) is an N6-acetyllysine. 2 positions are modified to phosphothreonine: threonine 235 and threonine 240. 2 short sequence motifs (nuclear localization signal) span residues 321 to 325 (RRLRI) and 388 to 392 (KKLRP). Serine 426 carries the post-translational modification Phosphoserine. Residue lysine 513 forms a Glycyl lysine isopeptide (Lys-Gly) (interchain with G-Cter in SUMO2) linkage. Residues 525 to 660 (GRSEAVVEYV…KQRKEKVWAH (136 aa)) enclose the TNase-like 4 domain. At lysine 641 the chain carries N6-acetyllysine. The residue at position 645 (serine 645) is a Phosphoserine. Residues 729-787 (APRRGEFCIAKFVDGEWYRARVEKVESPAKVHVFYIDYGNREILPSTRLGTLPPAFSTR) enclose the Tudor domain. Threonine 779 carries the phosphothreonine modification. 2 positions are modified to phosphoserine: serine 785 and serine 909.

As to quaternary structure, forms a ternary complex with STAT6 and POLR2A. Associates with the RNA-induced silencing complex (RISC). Interacts with the RISC components AGO2, FMR1 and TNRC6A. Interacts with GTF2E1 and GTF2E2. Interacts with PIM1. Interacts with STAT5. Interacts with SYT11 (via C2 2 domain); the interaction with SYT11 is direct. Phosphorylated by PIM1 in vitro.

Its subcellular location is the cytoplasm. It is found in the nucleus. The protein localises to the melanosome. It carries out the reaction Endonucleolytic cleavage to nucleoside 3'-phosphates and 3'-phosphooligonucleotide end-products.. Endonuclease that mediates miRNA decay of both protein-free and AGO2-loaded miRNAs. As part of its function in miRNA decay, regulates mRNAs involved in G1-to-S phase transition. Functions as a bridging factor between STAT6 and the basal transcription factor. Plays a role in PIM1 regulation of MYB activity. Functions as a transcriptional coactivator for STAT5. The polypeptide is Staphylococcal nuclease domain-containing protein 1 (Snd1) (Mus musculus (Mouse)).